The sequence spans 265 residues: MKLKAAAVVSCDFGKGKLYPQVMGAGWNESGENRAASSAQLVGWPPVRTFRKNLSTPKPADADDLMNKMKPCSDEGHGSRDAAQERRPSSTMFVKVNLEGYAVGRKIDLKAHRSYDSLSQALQSMFHGFLSDGIATRDNELQRMEEGSKKRYVLVYEDNEGDRMLVGDVPWDGREAGSGRRPAAGVDQVSERPDVSPAMATTPAATVAVTQRRELTNLAATVAAHVLVFLASGQGHINCMMHFAMGDIVELLESLGTNGSLVKGD.

Disordered stretches follow at residues 54 to 88 (LSTPKPADADDLMNKMKPCSDEGHGSRDAAQERRP) and 172 to 199 (DGREAGSGRRPAAGVDQVSERPDVSPAM). Positions 65 to 88 (LMNKMKPCSDEGHGSRDAAQERRP) are enriched in basic and acidic residues. The region spanning 91–194 (TMFVKVNLEG…GVDQVSERPD (104 aa)) is the PB1 domain.

Belongs to the Aux/IAA family. As to quaternary structure, homodimers and heterodimers. As to expression, highly expressed in flowers. Expressed in roots and seedlings.

The protein localises to the nucleus. Aux/IAA proteins are short-lived transcriptional factors that function as repressors of early auxin response genes at low auxin concentrations. The protein is Auxin-responsive protein IAA22 (IAA22) of Oryza sativa subsp. japonica (Rice).